A 417-amino-acid chain; its full sequence is Serine hydroxymethyltransferase (417 aa).

(6S)-5,6,7,8-tetrahydrofolate-binding positions include leucine 121 and 125–127 (GHL). An N6-(pyridoxal phosphate)lysine modification is found at lysine 229. (6S)-5,6,7,8-tetrahydrofolate is bound at residue 355 to 357 (SPF).

The protein belongs to the SHMT family. Homodimer. It depends on pyridoxal 5'-phosphate as a cofactor.

The protein resides in the cytoplasm. It carries out the reaction (6R)-5,10-methylene-5,6,7,8-tetrahydrofolate + glycine + H2O = (6S)-5,6,7,8-tetrahydrofolate + L-serine. It functions in the pathway one-carbon metabolism; tetrahydrofolate interconversion. The protein operates within amino-acid biosynthesis; glycine biosynthesis; glycine from L-serine: step 1/1. Catalyzes the reversible interconversion of serine and glycine with tetrahydrofolate (THF) serving as the one-carbon carrier. This reaction serves as the major source of one-carbon groups required for the biosynthesis of purines, thymidylate, methionine, and other important biomolecules. Also exhibits THF-independent aldolase activity toward beta-hydroxyamino acids, producing glycine and aldehydes, via a retro-aldol mechanism. The sequence is that of Serine hydroxymethyltransferase from Buchnera aphidicola subsp. Acyrthosiphon pisum (strain 5A).